A 519-amino-acid polypeptide reads, in one-letter code: Alkaline phosphatase, tissue-nonspecific isozyme (519 aa).

The N-terminal stretch at 1–16 (MKAFLLTLLAQLCSAS) is a signal peptide. D59 is a Mg(2+) binding site. 2 residues coordinate Zn(2+): D59 and S109. S109 functions as the Phosphoserine intermediate in the catalytic mechanism. C138 and C200 are joined by a disulfide. A glycan (N-linked (GlcNAc...) asparagine) is linked at N139. T172 lines the Mg(2+) pocket. N229 carries N-linked (GlcNAc...) asparagine glycosylation. E234 serves as a coordination point for Ca(2+). N-linked (GlcNAc...) asparagine glycosylation occurs at N278. Residues F289 and E290 each contribute to the Ca(2+) site. N302 carries N-linked (GlcNAc...) asparagine glycosylation. D305 is a binding site for Ca(2+). E331 contacts Mg(2+). Residues D336, H340, D377, and H378 each coordinate Zn(2+). A glycan (N-linked (GlcNAc...) asparagine) is linked at N429. H453 provides a ligand contact to Zn(2+). C488 and C496 are oxidised to a cystine. S498 carries GPI-anchor amidated serine lipidation. The propeptide at 499-519 (AARPAATATLLPVLLLLLLLC) is removed in mature form.

This sequence belongs to the alkaline phosphatase family. In terms of assembly, homodimer. Mg(2+) is required as a cofactor. It depends on Zn(2+) as a cofactor. Requires Ca(2+) as cofactor.

It is found in the cell membrane. It localises to the extracellular vesicle membrane. It catalyses the reaction a phosphate monoester + H2O = an alcohol + phosphate. The catalysed reaction is diphosphate + H2O = 2 phosphate + H(+). It carries out the reaction pyridoxal 5'-phosphate + H2O = pyridoxal + phosphate. The enzyme catalyses phosphoethanolamine + H2O = ethanolamine + phosphate. It catalyses the reaction ATP + H2O = ADP + phosphate + H(+). The catalysed reaction is ADP + H2O = AMP + phosphate + H(+). It carries out the reaction AMP + H2O = adenosine + phosphate. Its function is as follows. Alkaline phosphatase that metabolizes various phosphate compounds and plays a key role in skeletal mineralization and adaptive thermogenesis. Has broad substrate specificity and can hydrolyze a considerable variety of compounds: however, only a few substrates, such as diphosphate (inorganic pyrophosphate; PPi) and pyridoxal 5'-phosphate (PLP) are natural substrates. Plays an essential role in skeletal and dental mineralization via its ability to hydrolyze extracellular diphosphate, a potent mineralization inhibitor, to phosphate: it thereby promotes hydroxyapatite crystal formation and increases inorganic phosphate concentration. Catalyzes dephosphorylation of PLP to pyridoxal (PL), the transportable form of vitamin B6, in order to provide a sufficient amount of PLP in the brain, an essential cofactor for enzymes catalyzing the synthesis of diverse neurotransmitters. Additionally, also able to mediate ATP degradation in a stepwise manner to adenosine, thereby regulating the availability of ligands for purinergic receptors. Involved in the establishment and growth of feather germs. This is Alkaline phosphatase, tissue-nonspecific isozyme (ALPL) from Gallus gallus (Chicken).